The primary structure comprises 536 residues: Chaperonin GroEL 2 (536 aa).

ATP is bound by residues 29 to 32, Lys-50, Gly-416, and Asp-497; that span reads TLGP.

Belongs to the chaperonin (HSP60) family. In terms of assembly, forms a cylinder of 14 subunits composed of two heptameric rings stacked back-to-back. Interacts with the co-chaperonin GroES.

It localises to the cytoplasm. The enzyme catalyses ATP + H2O + a folded polypeptide = ADP + phosphate + an unfolded polypeptide.. Together with its co-chaperonin GroES, plays an essential role in assisting protein folding. The GroEL-GroES system forms a nano-cage that allows encapsulation of the non-native substrate proteins and provides a physical environment optimized to promote and accelerate protein folding. The chain is Chaperonin GroEL 2 from Chlamydia caviae (strain ATCC VR-813 / DSM 19441 / 03DC25 / GPIC) (Chlamydophila caviae).